The following is a 1320-amino-acid chain: Junctional cadherin 5-associated protein (1320 aa).

Disordered regions lie at residues 1-124 (MYSV…GSGS), 183-202 (KKPRELGRQASDGDGRKRPQ), 209-233 (YPFVHGEHTSQNRKKSQSLPRALSP), 252-426 (GVPK…SIQY), 452-492 (DDTS…NEQS), 676-720 (ASSP…PTPT), 741-802 (NQKP…STTG), and 835-942 (ELQE…QKSQ). 2 stretches are compositionally biased toward polar residues: residues 58–71 (RTSLGTGHVSNSEN) and 95–107 (NQPSLAWSSQPQS). Positions 108–119 (GRDDIYWSRGRQ) are enriched in basic and acidic residues. Pro residues predominate over residues 255-267 (KVPPYPPSFPSPS). Over residues 308–329 (FQDHQHRDPRGSYPTRSKDPSH) the composition is skewed to basic and acidic residues. The segment covering 338-356 (LEPPVYVPPPSYRSPPQHI) has biased composition (pro residues). Over residues 369 to 378 (VSSNQSQQQV) the composition is skewed to polar residues. Residues 404-415 (GSPPQGLPPQPY) show a composition bias toward pro residues. Polar residues predominate over residues 454–465 (TSYNPGLLTTQE). T484 bears the Phosphothreonine mark. Position 486 is a phosphoserine (S486). Positions 741-782 (NQKPSVPHLQGQTSLSPSRNSAFSRTSSAINQASMSKGTSDQ) are enriched in polar residues. The segment covering 849-859 (EDSEAEQPEDC) has biased composition (acidic residues). At S851 the chain carries Phosphoserine. A compositionally biased stretch (polar residues) spans 865–877 (KSWALQGTRTAQQ). Phosphoserine occurs at positions 1027 and 1033. Disordered stretches follow at residues 1085–1116 (ARRTEQSQLPEPDASACNPSSSREDSSHSLAL) and 1153–1174 (SDVDGFPTSQATSPEPGKKDEE). A phosphoserine mark is found at S1245 and S1248. Positions 1275–1320 (DEAWQAGHLPSVSQNENGHPEVPRDKMSDQDLWCADSYDPSRVERV) are disordered. Basic and acidic residues predominate over residues 1292 to 1303 (GHPEVPRDKMSD).

It is found in the cell junction. The protein resides in the adherens junction. The chain is Junctional cadherin 5-associated protein from Mus musculus (Mouse).